A 488-amino-acid polypeptide reads, in one-letter code: L-arabinose isomerase 2 (488 aa).

Residues Glu-306, Glu-331, His-348, and His-447 each contribute to the Mn(2+) site.

Belongs to the arabinose isomerase family. Mn(2+) is required as a cofactor.

It catalyses the reaction beta-L-arabinopyranose = L-ribulose. The protein operates within carbohydrate degradation; L-arabinose degradation via L-ribulose; D-xylulose 5-phosphate from L-arabinose (bacterial route): step 1/3. Catalyzes the conversion of L-arabinose to L-ribulose. The chain is L-arabinose isomerase 2 from Clostridium acetobutylicum (strain ATCC 824 / DSM 792 / JCM 1419 / IAM 19013 / LMG 5710 / NBRC 13948 / NRRL B-527 / VKM B-1787 / 2291 / W).